Here is a 185-residue protein sequence, read N- to C-terminus: C-type lectin domain family 5 member A (185 aa).

The Cytoplasmic portion of the chain corresponds to 1–4 (MNWH). Residues 5-27 (MIISGLIVVVLKIVGMTFFLLYF) form a helical; Signal-anchor for type II membrane protein membrane-spanning segment. Topologically, residues 28–185 (PQIFGEHNVS…YRSICEKSAQ (158 aa)) are extracellular. N-linked (GlcNAc...) asparagine glycans are attached at residues asparagine 35 and asparagine 55. An intrachain disulfide couples cysteine 68 to cysteine 79. One can recognise a C-type lectin domain in the interval 75–181 (HQGRCFFLST…CDVNYRSICE (107 aa)). N-linked (GlcNAc...) asparagine glycans are attached at residues asparagine 90, asparagine 117, asparagine 141, and asparagine 146. 2 disulfides stabilise this stretch: cysteine 96–cysteine 180 and cysteine 158–cysteine 172.

As to quaternary structure, monomer. Homodimer. The majority of CLEC5A is expressed as a monomeric form on macrophages. Interacts with TYROBP/DAP12. The interaction with TYROBP is required for CLEC5 cell surface expression. Interacts with HCST/DAP10. Forms a CLEC5A/TYROBP/HCST trimolecular complex depending almost solely on TYROBP. N-glycosylated. Contains sialic acid residues. Constitutively expressed in monocytes and macrophages.

The protein resides in the cell membrane. Its function is as follows. Functions as a positive regulator of osteoclastogenesis. Cell surface receptor that signals via TYROBP. Regulates inflammatory responses. The sequence is that of C-type lectin domain family 5 member A (CLEC5A) from Sus scrofa (Pig).